The following is a 350-amino-acid chain: 3-dehydroquinate synthase (350 aa).

Residues 106–110 (GVIGD), 130–131 (TS), Lys-143, and Lys-152 each bind NAD(+). Glu-185, His-246, and His-263 together coordinate Zn(2+).

It belongs to the sugar phosphate cyclases superfamily. Dehydroquinate synthase family. It depends on Co(2+) as a cofactor. Zn(2+) serves as cofactor. The cofactor is NAD(+).

The protein resides in the cytoplasm. The enzyme catalyses 7-phospho-2-dehydro-3-deoxy-D-arabino-heptonate = 3-dehydroquinate + phosphate. Its pathway is metabolic intermediate biosynthesis; chorismate biosynthesis; chorismate from D-erythrose 4-phosphate and phosphoenolpyruvate: step 2/7. Catalyzes the conversion of 3-deoxy-D-arabino-heptulosonate 7-phosphate (DAHP) to dehydroquinate (DHQ). This chain is 3-dehydroquinate synthase, found in Clostridium botulinum (strain Alaska E43 / Type E3).